Reading from the N-terminus, the 780-residue chain is MERMARVTTALTGRTMFCHLDAPANAISVCRDAAQVVVAGRNIFKIYSMEEDHFVEKLNLRVGRKPSLNFSCADVVWHQMDDNLLATAATNGVVVTWNLGKPSRNKQDQLFTEHKRTVNKVCFHPTEVYMLLSGSQDGYMKCFDLRKKDSVSTFSGQSESVRDVQFSIRDYFTFAATFENGNVQLWDIRRPDRCERMFTAHNGPVFCCDWHPEDRGWLATGGRDKMVKVWDMNTNRAKEIYCVQTIASVARVKWRPERKYHIGTCSMMVDHNIYVWDVRRPFIPFATFEEHKDVTTGIIWRHMHDPSFLLSGSKDSTLYQHIFRDARRPIDRANPEGLCYGLFGDLAFAAKESLISSSSSHDSNRKPYDRRHPIFFLRRPDPTEQFENISSGLSVFEAGGGDMGWFVATAERYALAGRPLAELCDHNANVARDLNRWQVAQTWTMLRIIYCSPGTVPPANPNHSLGKSGTSLPLLNSFNLKELPSGIVGESRLEHSKGDSRADSILMDPAAINNDENEETEGSDVPADYLLGDVEGDEDELYMMDQEQPHTEEQEYVLPQEGFPLRHEIMDNPSALDHLQEKADSPHVSGNEAETVSLTPVESFSLISISHALYENRLPSDFFSPTVRDMLCFYAEQGDVQMAASVLIVLGDRIRKEIDEQTQEHWFTSYIDLLQRFKLWNVSNQVIKLSTCSSINCLNQASTTLHVNCSNCKRPMSNKGWICDRCRQCASMCAVCHHVVKGLFVWCQGCCHGGHLQHIMNWMQNNCYCPAGCGHVCEYS.

WD repeat units lie at residues 67 to 107 (SLNF…RNKQ), 113 to 153 (EHKR…SVST), 156 to 196 (GQSE…RCER), 200 to 240 (AHNG…AKEI), 244 to 286 (QTIA…IPFA), and 290 to 333 (EHKD…IDRA). The segment at 708-730 (NCSNCKRPMSNKGWICDRCRQCA) adopts a C4-type zinc-finger fold. Zn(2+) contacts are provided by Cys-709, Cys-712, Cys-723, Cys-726, Cys-733, Cys-736, Cys-747, Cys-750, His-752, His-755, His-758, Cys-769, Cys-773, His-775, and Cys-777. An RING-type; atypical zinc finger spans residues 731–780 (SMCAVCHHVVKGLFVWCQGCCHGGHLQHIMNWMQNNCYCPAGCGHVCEYS).

It belongs to the WD repeat WDR24 family. As to quaternary structure, component of the GATOR2 subcomplex, composed of MIOS, SEC13, SEH1L, WDR24 and WDR59. The GATOR2 complex interacts with CASTOR1 and CASTOR2; the interaction is negatively regulated by arginine. The GATOR2 complex interacts with SESN1, SESN2 and SESN3; the interaction is negatively regulated by amino acids.

It localises to the lysosome membrane. It carries out the reaction S-ubiquitinyl-[E2 ubiquitin-conjugating enzyme]-L-cysteine + [acceptor protein]-L-lysine = [E2 ubiquitin-conjugating enzyme]-L-cysteine + N(6)-ubiquitinyl-[acceptor protein]-L-lysine.. Its pathway is protein modification; protein ubiquitination. With respect to regulation, the GATOR2 complex is negatively regulated by the upstream amino acid sensors CASTOR1 and SESN2, which sequester the GATOR2 complex in absence of amino acids. In the presence of abundant amino acids, GATOR2 is released from CASTOR1 and SESN2 and activated. Catalytic component of the GATOR2 complex, a multiprotein complex that acts as an activator of the amino acid-sensing branch of the mTORC1 signaling pathway. The GATOR2 complex indirectly activates mTORC1 through the inhibition of the GATOR1 subcomplex. GATOR2 probably acts as an E3 ubiquitin-protein ligase toward GATOR1. In the presence of abundant amino acids, the GATOR2 complex mediates ubiquitination of the NPRL2 core component of the GATOR1 complex, leading to GATOR1 inactivation. In the absence of amino acids, GATOR2 is inhibited, activating the GATOR1 complex. In addition to its role in regulation of the mTORC1 complex, promotes the acidification of lysosomes and facilitates autophagic flux. Within the GATOR2 complex, WDR24 constitutes the catalytic subunit that mediates 'Lys-6'-linked ubiquitination of NPRL2. The chain is GATOR2 complex protein WDR24 from Xenopus laevis (African clawed frog).